The following is a 194-amino-acid chain: Cysteine and glycine-rich protein 3 (194 aa).

Residues 1–5 (MPNWG) form an interaction with TCAP region. One can recognise an LIM zinc-binding 1 domain in the interval 10-61 (CGACEKTVYHAEEIQCNGRSFHKTCFHCMACRKALDSTTVAAHESEIYCKVC). The Nuclear localization signal signature appears at 64 to 69 (RRYGPK). The segment at 94–105 (QSPKPARSVTTS) is interaction with CLF2 and isoform 2. Residues S95 and S153 each carry the phosphoserine modification. The LIM zinc-binding 2 domain occupies 120–171 (CPRCGKSVYAAEKVMGGGKPWHKTCFRCAICGKSLESTNVTDKDGELYCKVC).

Self-associates. Oligomeric in the cytoplasm and monomeric in the nucleus. Homooligomers preferentially form along the actin cytoskeleton. Isoform 2 interacts with isoform 1. Isoform 1 but not isoform 2 interacts with MYOD1 and MYOG. Isoform 1 interacts with TCAP, ACTN2 and NRAP. Isoform 2 interacts with TCAP and alpha-actinin. Interacts with LDHD. Interacts (via N-terminus)with GLRX3 (via C-terminus) and PPP3CA; GLRX3 and calcineurin compete for interaction with CSRP3. Interacts with MYF6. Interacts with CFL2; the stoichiometry influences F-actin depolymerization and possibly two molecules of CFL2 can interact with one molecule of CSRP3 resulting in the highest functional impact; the interaction is stronger with phosphorylated CFL2. Phosphorylated by PKC/PRKCA. In terms of tissue distribution, cardiac and slow-twitch skeletal muscles. Isoform 2 is expressed in striated muscle. Isoform 2 is specifically expressed at higher levels in patients with neuromuscular diseases, such as limb-girdle muscular dystrophy 2A (LGMD2A), Duchenne muscular dystrophy (DMD) and dermatomyositis.

It is found in the nucleus. Its subcellular location is the cytoplasm. The protein localises to the cytoskeleton. The protein resides in the myofibril. It localises to the sarcomere. It is found in the z line. Functionally, positive regulator of myogenesis. Acts as a cofactor for myogenic bHLH transcription factors such as MYOD1, and probably MYOG and MYF6. Enhances the DNA-binding activity of the MYOD1:TCF3 isoform E47 complex and may promote formation of a functional MYOD1:TCF3 isoform E47:MEF2A complex involved in myogenesis. Plays a crucial and specific role in the organization of cytosolic structures in cardiomyocytes. Could play a role in mechanical stretch sensing. May be a scaffold protein that promotes the assembly of interacting proteins at Z-line structures. It is essential for calcineurin anchorage to the Z line. Required for stress-induced calcineurin-NFAT activation. The role in regulation of cytoskeleton dynamics by association with CFL2 is reported conflictingly: Shown to enhance CFL2-mediated F-actin depolymerization dependent on the CSRP3:CFL2 molecular ratio, and also shown to reduce the ability of CLF1 and CFL2 to enhance actin depolymerization. Proposed to contribute to the maintenance of muscle cell integrity through an actin-based mechanism. Can directly bind to actin filaments, cross-link actin filaments into bundles without polarity selectivity and protect them from dilution- and cofilin-mediated depolymerization; the function seems to involve its self-association. In vitro can inhibit PKC/PRKCA activity. Proposed to be involved in cardiac stress signaling by down-regulating excessive PKC/PRKCA signaling. Its function is as follows. May play a role in early sarcomere organization. Overexpression in myotubes negatively regulates myotube differentiation. By association with isoform 1 and thus changing the CSRP3 isoform 1:CFL2 stoichiometry is proposed to down-regulate CFL2-mediated F-actin depolymerization. This is Cysteine and glycine-rich protein 3 (CSRP3) from Homo sapiens (Human).